The following is a 253-amino-acid chain: L-cysteine S-thiosulfotransferase subunit SoxA (253 aa).

A signal peptide spans 1-17 (MGKWVTIIFVLFLYAIA). Positions 44–129 (VYAEQGRDMF…SIATYVATLS (86 aa)) constitute a Cytochrome c domain. C64, C67, H68, C102, C165, C168, and H169 together coordinate heme c. Position 210 (R210) interacts with substrate. C214 contributes to the heme c binding site. Residue C214 is the Cysteine persulfide intermediate of the active site.

Belongs to the SoxA family. Heterodimer of SoxA and SoxX. It depends on heme c as a cofactor. Cysteine persulfide at Cys-214.

It is found in the periplasm. It carries out the reaction L-cysteinyl-[SoxY protein] + thiosulfate + 2 Fe(III)-[cytochrome c] = S-sulfosulfanyl-L-cysteinyl-[SoxY protein] + 2 Fe(II)-[cytochrome c] + 2 H(+). The enzyme catalyses S-sulfanyl-L-cysteinyl-[SoxY protein] + thiosulfate + 2 Fe(III)-[cytochrome c] = S-(2-sulfodisulfanyl)-L-cysteinyl-[SoxY protein] + 2 Fe(II)-[cytochrome c] + 2 H(+). C-type diheme cytochrome, which is part of the SoxAX cytochrome complex involved in sulfur oxidation. The SoxAX complex catalyzes the formation of a heterodisulfide bond between the conserved cysteine residue on a sulfur carrier SoxYZ complex subunit SoxY and thiosulfate or other inorganic sulfur substrates. This leads to the liberation of two electrons, which may be transferred from the SoxAX complex to another cytochrome c that then channels them into the respiratory electron transport chain. Some electrons may be used for reductive CO(2) fixation. The chain is L-cysteine S-thiosulfotransferase subunit SoxA from Hydrogenobacter thermophilus (strain DSM 6534 / IAM 12695 / TK-6).